We begin with the raw amino-acid sequence, 43 residues long: Protein PsbN (43 aa).

A helical transmembrane segment spans residues T5–F27.

This sequence belongs to the PsbN family.

Its subcellular location is the plastid. The protein resides in the chloroplast thylakoid membrane. Functionally, may play a role in photosystem I and II biogenesis. This Thuja plicata (Western red-cedar) protein is Protein PsbN.